Consider the following 335-residue polypeptide: Nucleoid-associated protein YejK (335 aa).

The protein belongs to the YejK family.

It is found in the cytoplasm. The protein localises to the nucleoid. In Salmonella arizonae (strain ATCC BAA-731 / CDC346-86 / RSK2980), this protein is Nucleoid-associated protein YejK.